A 252-amino-acid polypeptide reads, in one-letter code: Indole-3-glycerol phosphate synthase (252 aa).

It belongs to the TrpC family.

The enzyme catalyses 1-(2-carboxyphenylamino)-1-deoxy-D-ribulose 5-phosphate + H(+) = (1S,2R)-1-C-(indol-3-yl)glycerol 3-phosphate + CO2 + H2O. It participates in amino-acid biosynthesis; L-tryptophan biosynthesis; L-tryptophan from chorismate: step 4/5. This Listeria welshimeri serovar 6b (strain ATCC 35897 / DSM 20650 / CCUG 15529 / CIP 8149 / NCTC 11857 / SLCC 5334 / V8) protein is Indole-3-glycerol phosphate synthase.